The chain runs to 512 residues: Pantetheinase (512 aa).

Positions 1-23 (MGMSWWLACAAAFSALCVLKASS) are cleaved as a signal peptide. The CN hydrolase domain maps to 32-308 (YEHAVILPKD…GKLLFAQLKS (277 aa)). The active-site Proton acceptor is Glu-81. N-linked (GlcNAc...) asparagine glycans are attached at residues Asn-132 and Asn-148. Lys-180 functions as the Proton donor in the catalytic mechanism. The active-site Nucleophile is Cys-213. N-linked (GlcNAc...) asparagine glycans are attached at residues Asn-316 and Asn-354. A lipid anchor (GPI-anchor amidated asparagine) is attached at Asn-488. Positions 489–512 (ASSDFIAHSLIIMLIVTPIIHYLC) are cleaved as a propeptide — removed in mature form.

This sequence belongs to the carbon-nitrogen hydrolase superfamily. BTD/VNN family. In terms of assembly, monomer. In terms of processing, N-glycosylated. In terms of tissue distribution, detected in kidney (at protein level). Ubiquitous.

It localises to the cell membrane. The enzyme catalyses (R)-pantetheine + H2O = cysteamine + (R)-pantothenate. In terms of biological role, amidohydrolase that hydrolyzes specifically one of the carboamide linkages in D-pantetheine thus recycling pantothenic acid (vitamin B5) and releasing cysteamine. The sequence is that of Pantetheinase (Vnn1) from Mus musculus (Mouse).